The following is a 102-amino-acid chain: Peptide chaperone MftB (102 aa).

Belongs to the peptide chaperone MftB family.

In terms of biological role, peptide chaperone involved in the biosynthesis of the enzyme cofactor mycofactocin (MFT). Binds MftA and MftC with high affinity, and is essential for MftC activity on MftA, likely via the formation of a ternary complex. Is required for the in vivo ethanol assimilation in M.smegmatis. The protein is Peptide chaperone MftB of Mycolicibacterium smegmatis (strain ATCC 700084 / mc(2)155) (Mycobacterium smegmatis).